The primary structure comprises 225 residues: 3-dehydroquinate dehydratase (225 aa).

Residues 30–32 and arginine 62 contribute to the 3-dehydroquinate site; that span reads EWR. The active-site Proton donor/acceptor is histidine 118. Lysine 143 serves as the catalytic Schiff-base intermediate with substrate. Arginine 186, serine 205, and glutamine 209 together coordinate 3-dehydroquinate.

The protein belongs to the type-I 3-dehydroquinase family. As to quaternary structure, homodimer.

The enzyme catalyses 3-dehydroquinate = 3-dehydroshikimate + H2O. It functions in the pathway metabolic intermediate biosynthesis; chorismate biosynthesis; chorismate from D-erythrose 4-phosphate and phosphoenolpyruvate: step 3/7. In terms of biological role, involved in the third step of the chorismate pathway, which leads to the biosynthesis of aromatic amino acids. Catalyzes the cis-dehydration of 3-dehydroquinate (DHQ) and introduces the first double bond of the aromatic ring to yield 3-dehydroshikimate. The sequence is that of 3-dehydroquinate dehydratase from Streptococcus mutans serotype c (strain ATCC 700610 / UA159).